A 362-amino-acid polypeptide reads, in one-letter code: Cobalt-precorrin-5B C(1)-methyltransferase (362 aa).

This sequence belongs to the CbiD family.

It catalyses the reaction Co-precorrin-5B + S-adenosyl-L-methionine = Co-precorrin-6A + S-adenosyl-L-homocysteine. It participates in cofactor biosynthesis; adenosylcobalamin biosynthesis; cob(II)yrinate a,c-diamide from sirohydrochlorin (anaerobic route): step 6/10. In terms of biological role, catalyzes the methylation of C-1 in cobalt-precorrin-5B to form cobalt-precorrin-6A. The polypeptide is Cobalt-precorrin-5B C(1)-methyltransferase (Synechococcus sp. (strain CC9902)).